The following is a 687-amino-acid chain: Protein-glutamine gamma-glutamyltransferase 2 (687 aa).

An N-acetylalanine modification is found at Ala2. Ser60 carries the phosphoserine modification. 2 disulfide bridges follow: Cys230/Cys370 and Cys370/Cys371. Residues Cys277, His335, and Asp358 contribute to the active site. Asn398, Asp400, Glu437, Glu447, and Glu452 together coordinate Ca(2+). At Lys468 the chain carries N6-acetyllysine. Arg476–Met483 provides a ligand contact to GTP. Position 539 (Glu539) interacts with Ca(2+). Arg580–Tyr583 is a GTP binding site. Gln633 is covalently cross-linked (Isoglutamyl lysine isopeptide (Gln-Lys) (interchain with K-?)).

This sequence belongs to the transglutaminase superfamily. Transglutaminase family. As to quaternary structure, monomer. Interacts with phospholipase C; promoting alpha-1 adrenergic receptor signaling. Interacts with PLCD1. Homooligomer. Requires Ca(2+) as cofactor. In terms of processing, disulfide bond formation inactivates the calcium-dependent acyltransferase activity. Cys-370 can form disulfide bonds with both Cys-230 and Cys-371: formation of a disulfide bond between Cys-230 and Cys-370 facilitates formation of the disulfide between Cys-370 and Cys-371, which promotes inactivation of the acyltransferase activity. May also form interchain disulfids between Cys-230 and Cys-370. Ca(2+) protects against disulfide bond formation and inactivation. Post-translationally, auto-transglutaminated: Forms covalent cross-links mediated by transglutaminase between Gln-633 and the epsilon-amino group of a lysine residue of itself or HMGB1, forming homopolymers and heteropolymers, respectively. S-nitrosylated, leading to inactivation of the acyltransferase activity.

It is found in the cytoplasm. The protein localises to the cytosol. Its subcellular location is the nucleus. The protein resides in the chromosome. It localises to the secreted. It is found in the extracellular space. The protein localises to the extracellular matrix. Its subcellular location is the cell membrane. The protein resides in the mitochondrion. It localises to the perinuclear region. The enzyme catalyses L-glutaminyl-[protein] + L-lysyl-[protein] = [protein]-L-lysyl-N(6)-5-L-glutamyl-[protein] + NH4(+). It catalyses the reaction L-glutaminyl-[protein] + serotonin = 5-serotonyl-L-glutamyl-[protein] + NH4(+). The catalysed reaction is L-glutaminyl-[protein] + dopamine = 5-dopaminyl-L-glutamyl-[protein] + NH4(+). It carries out the reaction L-glutaminyl-[protein] + histamine = 5-histaminyl-L-glutamyl-[protein] + NH4(+). The enzyme catalyses L-glutaminyl-[protein] + (R)-noradrenaline = 5-(R)-noradrenalinyl-L-glutamyl-[protein] + NH4(+). It catalyses the reaction L-glutaminyl-[protein] + H2O = L-glutamyl-[protein] + NH4(+). Acyltransferase activity is regulated by the binding of GTP and Ca(2+): inactivated by GTP, which stabilizes its closed structure, thereby obstructing the accessibility of substrates to the active sites. In contrast, Ca(2+) acts as a cofactor by inducing conformational change to the active open form. In absence of Ca(2+), Mg(2+) may bind Ca(2+)-binding sites, promoting GTP-binding and subsequent inhibition of the acyltransferase activity. Extracellularly reduced and activated by CLIC3. Specifically inhibited by compound VA4 ((S)-Benzyl (6-Acrylamido-1-(4-((5-(dimethylamino)naphthalen-1-yl)sulfonyl)piperazin-1-yl)-1-oxohexan-2-yl)carbamate), which specifically abolishes both the transamidation and GTP-binding activities. In terms of biological role, calcium-dependent acyltransferase that catalyzes the formation of covalent bonds between peptide-bound glutamine and various primary amines, such as gamma-amino group of peptide-bound lysine, or mono- and polyamines, thereby producing cross-linked or aminated proteins, respectively. Involved in many biological processes, such as bone development, angiogenesis, wound healing, cellular differentiation, chromatin modification and apoptosis. Acts as a protein-glutamine gamma-glutamyltransferase by mediating the cross-linking of proteins, such as ACO2, HSPB6, FN1, HMGB1, RAP1GDS1, SLC25A4/ANT1, SPP1 and WDR54. Under physiological conditions, the protein cross-linking activity is inhibited by GTP; inhibition is relieved by Ca(2+) in response to various stresses. When secreted, catalyzes cross-linking of proteins of the extracellular matrix, such as FN1 and SPP1 resulting in the formation of scaffolds. Plays a key role during apoptosis, both by (1) promoting the cross-linking of cytoskeletal proteins resulting in condensation of the cytoplasm, and by (2) mediating cross-linking proteins of the extracellular matrix, resulting in the irreversible formation of scaffolds that stabilize the integrity of the dying cells before their clearance by phagocytosis, thereby preventing the leakage of harmful intracellular components. In addition to protein cross-linking, can use different monoamine substrates to catalyze a vast array of protein post-translational modifications: mediates aminylation of serotonin, dopamine, noradrenaline or histamine into glutamine residues of target proteins to generate protein serotonylation, dopaminylation, noradrenalinylation or histaminylation, respectively. Mediates protein serotonylation of small GTPases during activation and aggregation of platelets, leading to constitutive activation of these GTPases. Plays a key role in chromatin organization by mediating serotonylation and dopaminylation of histone H3. Catalyzes serotonylation of 'Gln-5' of histone H3 (H3Q5ser) during serotonergic neuron differentiation, thereby facilitating transcription. Acts as a mediator of neurotransmission-independent role of nuclear dopamine in ventral tegmental area (VTA) neurons: catalyzes dopaminylation of 'Gln-5' of histone H3 (H3Q5dop), thereby regulating relapse-related transcriptional plasticity in the reward system. Regulates vein remodeling by mediating serotonylation and subsequent inactivation of ATP2A2/SERCA2. Also acts as a protein deamidase by mediating the side chain deamidation of specific glutamine residues of proteins to glutamate. Catalyzes specific deamidation of protein gliadin, a component of wheat gluten in the diet. May also act as an isopeptidase cleaving the previously formed cross-links. Also able to participate in signaling pathways independently of its acyltransferase activity: acts as a signal transducer in alpha-1 adrenergic receptor-mediated stimulation of phospholipase C-delta (PLCD) activity and is required for coupling alpha-1 adrenergic agonists to the stimulation of phosphoinositide lipid metabolism. Its function is as follows. Has cytotoxic activity: is able to induce apoptosis independently of its acyltransferase activity. The protein is Protein-glutamine gamma-glutamyltransferase 2 of Homo sapiens (Human).